The primary structure comprises 994 residues: Phosphoenolpyruvate carboxylase (994 aa).

The segment at 1-67 (MKAVRSDKTT…GRTREDKDHP (67 aa)) is disordered. 2 stretches are compositionally biased toward low complexity: residues 9–24 (TTQA…PAKA) and 34–57 (AAPQ…PKAN). Catalysis depends on residues His204 and Lys646.

The protein belongs to the PEPCase type 1 family. It depends on Mg(2+) as a cofactor.

The catalysed reaction is oxaloacetate + phosphate = phosphoenolpyruvate + hydrogencarbonate. In terms of biological role, forms oxaloacetate, a four-carbon dicarboxylic acid source for the tricarboxylic acid cycle. In Paraburkholderia xenovorans (strain LB400), this protein is Phosphoenolpyruvate carboxylase.